Reading from the N-terminus, the 415-residue chain is Esterase FrsA (415 aa).

The protein belongs to the FrsA family.

The enzyme catalyses a carboxylic ester + H2O = an alcohol + a carboxylate + H(+). In terms of biological role, catalyzes the hydrolysis of esters. This is Esterase FrsA from Yersinia pseudotuberculosis serotype O:1b (strain IP 31758).